The following is a 279-amino-acid chain: Diaminopimelate epimerase (279 aa).

Positions 13, 46, and 66 each coordinate substrate. The active-site Proton donor is cysteine 75. Residues 76–77, asparagine 161, asparagine 194, and 212–213 contribute to the substrate site; these read GN and ER. Cysteine 221 functions as the Proton acceptor in the catalytic mechanism. 222–223 serves as a coordination point for substrate; it reads GT.

It belongs to the diaminopimelate epimerase family. As to quaternary structure, homodimer.

It is found in the cytoplasm. The enzyme catalyses (2S,6S)-2,6-diaminopimelate = meso-2,6-diaminopimelate. It functions in the pathway amino-acid biosynthesis; L-lysine biosynthesis via DAP pathway; DL-2,6-diaminopimelate from LL-2,6-diaminopimelate: step 1/1. In terms of biological role, catalyzes the stereoinversion of LL-2,6-diaminopimelate (L,L-DAP) to meso-diaminopimelate (meso-DAP), a precursor of L-lysine and an essential component of the bacterial peptidoglycan. In Alkalilimnicola ehrlichii (strain ATCC BAA-1101 / DSM 17681 / MLHE-1), this protein is Diaminopimelate epimerase.